A 735-amino-acid polypeptide reads, in one-letter code: MASPLRFDGRVVLVTGAGGGLGRAYALAFAERGALVVVNDLGGDFKGVGKGSSAADKVVEEIRRRGGKAVANYDSVEAGEKLVKTALDTFGRIDVVVNNAGILRDRSFSRISDEDWDIIQRVHLRGSFQVTRAAWDHMKKQNYGRIIMTASASGIYGNFGQANYSAAKLGLLGLANTLVIEGRKNNIHCNTIAPNAGSRMTETVMPEDLVEALKPEYVAPLVLWLCHESCEENGGLFEVGAGWIGKLRWERTLGAIVRKRNQPMTPEAVRDNWVKICDFSNASKPKSIQESTGGIIEVLHKIDSEGISQNHTGQVASADASGFAGVVGHKLPSFSSSYTELQCIMYALGVGASVKNPKDLKFVYEGSADFSCLPTFGVIVAQKSLMSGGLAEVPGLSINFAKVLHGEQYLELYKPLPRSGELKCEAVIADILDKGSGIVIVMDVYSYSGKELICYNQFSVFVVGSGGFGGKRTSEKLKAAVAVPSRPPDAVLRDTTSLNQAALYRLSGDSNPLHIDPSFASIAGFEKPILHGLCTFGFSARHVLQQFADNDVSRFKAIKVRFAKPVYPGQTLQTEMWKEGNRIHFQTKVQETGDIVISNAYVDLVPTSGVSAQTPSEGGALQSALVFGEIGRRLKDVGREVVKKVNAVFEWHITKNGNVAAKWTIDLKNGSGEVYQGPAKGSADTTITISDEDFMEVVLGKLNPQNAFFSGRLKARGNIMLSQKLQMILKDYAKL.

The tract at residues 1 to 305 is (3R)-hydroxyacyl-CoA dehydrogenase; sequence MASPLRFDGR…IEVLHKIDSE (305 aa). NAD(+)-binding positions include 16–40, Leu-21, and Asp-40; that span reads GAGG…VVND. At Lys-46 the chain carries N6-acetyllysine; alternate. An N6-succinyllysine; alternate modification is found at Lys-46. A Phosphoserine modification is found at Ser-52. An N6-succinyllysine mark is found at Lys-57 and Lys-68. 75 to 76 provides a ligand contact to NAD(+); sequence SV. Lys-84 carries the N6-succinyllysine modification. Position 99 (Asn-99) interacts with NAD(+). Ser-151 contacts substrate. Tyr-164 acts as the Proton acceptor in catalysis. Residues 164–168 and 196–199 contribute to the NAD(+) site; these read YSAAK and AGSR. Thr-265 bears the Phosphothreonine mark. Lys-275 carries the N6-succinyllysine modification. Phosphoserine is present on residues Ser-304 and Ser-308. Positions 321-621 are enoyl-CoA hydratase 2; the sequence is SGFAGVVGHK…AQTPSEGGAL (301 aa). Lys-355 bears the N6-succinyllysine mark. (3R)-3-hydroxydecanoyl-CoA is bound at residue 405 to 406; the sequence is HG. Residue Lys-423 is modified to N6-succinyllysine. Residues Lys-434, 509–514, Gly-532, and Phe-562 each bind (3R)-3-hydroxydecanoyl-CoA; that span reads DSNPLH. In terms of domain architecture, MaoC-like spans 483–599; the sequence is VPSRPPDAVL…QETGDIVISN (117 aa). Position 564 is an N6-acetyllysine (Lys-564). Residues Lys-578 and Lys-662 each carry the N6-succinyllysine modification. Positions 623–735 constitute an SCP2 domain; sequence SALVFGEIGR…QMILKDYAKL (113 aa). Residue Lys-668 is modified to N6-acetyllysine. Substrate-binding residues include Gln-705 and Gln-723. Lys-724 carries the post-translational modification N6-succinyllysine. The Microbody targeting signal motif lies at 733–735; sequence AKL.

The protein belongs to the short-chain dehydrogenases/reductases (SDR) family. As to quaternary structure, homodimer.

The protein localises to the peroxisome. It carries out the reaction a (3R)-3-hydroxyacyl-CoA + NAD(+) = a 3-oxoacyl-CoA + NADH + H(+). It catalyses the reaction (24R,25R)-3alpha,7alpha,12alpha,24-tetrahydroxy-5beta-cholestan-26-oyl-CoA = (24E)-3alpha,7alpha,12alpha-trihydroxy-5beta-cholest-24-en-26-oyl-CoA + H2O. The catalysed reaction is a (3R)-3-hydroxyacyl-CoA = a (2E)-enoyl-CoA + H2O. The enzyme catalyses (2E)-octenoyl-CoA + H2O = (3R)-hydroxyoctanoyl-CoA. It carries out the reaction (3R)-hydroxyoctanoyl-CoA + NAD(+) = 3-oxooctanoyl-CoA + NADH + H(+). It catalyses the reaction (3R)-hydroxyhexadecanoyl-CoA + NAD(+) = 3-oxohexadecanoyl-CoA + NADH + H(+). The catalysed reaction is (2E)-hexadecenedioyl-CoA + H2O = (3R)-hydroxyhexadecanedioyl-CoA. The enzyme catalyses (3R)-hydroxyhexadecanedioyl-CoA + NAD(+) = 3-oxohexadecanedioyl-CoA + NADH + H(+). It carries out the reaction (3R)-hydroxyhexadecanoyl-CoA = (2E)-hexadecenoyl-CoA + H2O. It catalyses the reaction (3R)-3-hydroxydecanoyl-CoA = (2E)-decenoyl-CoA + H2O. The catalysed reaction is (3R)-3-hydroxydecanoyl-CoA + NAD(+) = 3-oxodecanoyl-CoA + NADH + H(+). The enzyme catalyses (24R,25R)-3alpha,7alpha,12alpha,24-tetrahydroxy-5beta-cholestan-26-oyl-CoA + NAD(+) = 3alpha,7alpha,12alpha-trihydroxy-24-oxo-5beta-cholestan-26-oyl-CoA + NADH + H(+). It functions in the pathway lipid metabolism; fatty acid beta-oxidation. Bifunctional enzyme acting on the peroxisomal fatty acid beta-oxidation pathway. Catalyzes two of the four reactions in fatty acid degradation: hydration of 2-enoyl-CoA (trans-2-enoyl-CoA) to produce (3R)-3-hydroxyacyl-CoA, and dehydrogenation of (3R)-3-hydroxyacyl-CoA to produce 3-ketoacyl-CoA (3-oxoacyl-CoA), which is further metabolized by SCPx. Can use straight-chain and branched-chain fatty acids, as well as bile acid intermediates as substrates. This Rattus norvegicus (Rat) protein is Peroxisomal multifunctional enzyme type 2.